The chain runs to 176 residues: ATP synthase subunit d, mitochondrial (176 aa).

As to quaternary structure, F-type ATP synthases have 2 components, the catalytic core F(1) and the membrane-embedded component F(0), linked together by a central stalk and a peripheral stalk. The central stalk, also called rotor shaft, is often seen as part of F(1). The peripheral stalk is seen as part of F(0). F(0) contains the membrane channel next to the rotor. F-type ATP synthases form dimers but each monomer functions independently in ATP generation. The dimer consists of 17 different polypeptides: ATP1 (subunit alpha, 3 molecules per monomer, part of F(1)), ATP2 (subunit beta, 3 copies per monomer, part of F(1)), ATP3 (subunit gamma, part of the central stalk), ATP4 (subunit b, part of the peripheral stalk), ATP5/OSCP (subunit 5/OSCP, part of the peripheral stalk), ATP6 (subunit a, part of the peripheral stalk), ATP7 (subunit d, part of the peripheral stalk), ATP8 (subunit 8, part of the peripheral stalk), OLI1 (subunit c, part of the rotor, 10 molecules per monomer), ATP14 (subunit h, part of the peripheral stalk), ATP15 (subunit epsilon, part of the central stalk), ATP16 (subunit delta, part of the central stalk), ATP17 (subunit f, part of the peripheral stalk), ATP18 (subunit i/j, part of the peripheral stalk), ATP19 (subunit k, dimer-specific, at interface between monomers), ATP20 (subunit g, at interface between monomers), TIM11 (subunit e, at interface between monomers).

It localises to the mitochondrion inner membrane. In terms of biological role, mitochondrial membrane ATP synthase (F(1)F(0) ATP synthase or Complex V) produces ATP from ADP in the presence of a proton gradient across the membrane which is generated by electron transport complexes of the respiratory chain. F-type ATP synthases consist of two structural domains, F(1) - containing the extramembraneous catalytic core, and F(0) - containing the membrane proton channel, linked together by a central stalk and a peripheral stalk. During catalysis, ATP synthesis in the catalytic domain of F(1) is coupled via a rotary mechanism of the central stalk subunits to proton translocation. Part of the complex F(0) domain and the peripheral stalk, which acts as a stator to hold the catalytic alpha/ATP1(3)beta/ATP2(3) subcomplex and subunit a/ATP6 static relative to the rotary elements. In Yarrowia lipolytica (strain CLIB 122 / E 150) (Yeast), this protein is ATP synthase subunit d, mitochondrial.